The primary structure comprises 341 residues: Methionine import ATP-binding protein MetN (341 aa).

Positions 9–247 constitute an ABC transporter domain; the sequence is ISVEQLNKEI…PQSAITEELF (239 aa). 41–48 is a binding site for ATP; that stretch reads GHSGSGKS.

This sequence belongs to the ABC transporter superfamily. Methionine importer (TC 3.A.1.24) family. As to quaternary structure, the complex is composed of two ATP-binding proteins (MetN), two transmembrane proteins (MetI) and a solute-binding protein (MetQ).

The protein resides in the cell inner membrane. It catalyses the reaction L-methionine(out) + ATP + H2O = L-methionine(in) + ADP + phosphate + H(+). The enzyme catalyses D-methionine(out) + ATP + H2O = D-methionine(in) + ADP + phosphate + H(+). In terms of biological role, part of the ABC transporter complex MetNIQ involved in methionine import. Responsible for energy coupling to the transport system. This Chlamydia abortus (strain DSM 27085 / S26/3) (Chlamydophila abortus) protein is Methionine import ATP-binding protein MetN.